A 771-amino-acid polypeptide reads, in one-letter code: Kojibiose phosphorylase (771 aa).

A substrate-binding site is contributed by 358 to 359 (WD). Glu498 acts as the Proton donor in catalysis. 611-612 (KQ) serves as a coordination point for substrate.

This sequence belongs to the glycosyl hydrolase 65 family.

It catalyses the reaction kojibiose + phosphate = beta-D-glucose 1-phosphate + D-glucose. Its function is as follows. Catalyzes the reversible phosphorolysis of kojibiose into beta-D-glucose 1-phosphate (Glc1P) and D-glucose. This chain is Kojibiose phosphorylase (kojP), found in Caldanaerobacter subterraneus subsp. tengcongensis (strain DSM 15242 / JCM 11007 / NBRC 100824 / MB4) (Thermoanaerobacter tengcongensis).